The chain runs to 194 residues: Surfactant protein C (194 aa).

The interval 1–21 (MDMGSKEVLMESPPDYSTGPR) is disordered. The propeptide occupies 1–23 (MDMGSKEVLMESPPDYSTGPRSQ). Residues Cys28 and Cys29 are each lipidated (S-palmitoyl cysteine). The propeptide occupies 59-194 (HMSQKHTEMV…LCGELPLYYI (136 aa)). The region spanning 95–194 (FSIGSTGIVL…LCGELPLYYI (100 aa)) is the BRICHOS domain. Cys122 and Cys186 are disulfide-bonded. A disordered region spans residues 149–170 (SSTPTSKLGQEEGHSAGSDSDS).

The protein resides in the secreted. It is found in the extracellular space. It localises to the surface film. Pulmonary surfactant associated proteins promote alveolar stability by lowering the surface tension at the air-liquid interface in the peripheral air spaces. The protein is Surfactant protein C of Rattus norvegicus (Rat).